The sequence spans 142 residues: HTH-type transcriptional regulator MntR (142 aa).

Residues 1–63 (MPTPSMEDYI…YEKYRGLILT (63 aa)) form the HTH dtxR-type domain. Mn(2+) is bound by residues aspartate 8, glutamate 11, histidine 77, glutamate 99, glutamate 102, and histidine 103.

This sequence belongs to the DtxR/MntR family. Homodimer.

It is found in the cytoplasm. With respect to regulation, DNA binding is strongly activated by Mn(2+). Functionally, central regulator of manganese homeostasis. The sequence is that of HTH-type transcriptional regulator MntR from Listeria innocua serovar 6a (strain ATCC BAA-680 / CLIP 11262).